The following is a 239-amino-acid chain: Ribonuclease HII (239 aa).

An RNase H type-2 domain is found at 18–231 (KIIVGLDEAG…SKNLLKEIEE (214 aa)). Residues Asp-24, Glu-25, and Asp-125 each contribute to the a divalent metal cation site.

Belongs to the RNase HII family. Requires Mn(2+) as cofactor. Mg(2+) serves as cofactor.

Its subcellular location is the cytoplasm. It carries out the reaction Endonucleolytic cleavage to 5'-phosphomonoester.. Endonuclease that specifically degrades the RNA of RNA-DNA hybrids. The sequence is that of Ribonuclease HII from Methanococcus maripaludis (strain C5 / ATCC BAA-1333).